The chain runs to 64 residues: Large ribosomal subunit protein bL35 (64 aa).

This sequence belongs to the bacterial ribosomal protein bL35 family.

This is Large ribosomal subunit protein bL35 from Pseudomonas entomophila (strain L48).